A 163-amino-acid polypeptide reads, in one-letter code: Putative 4-hydroxy-4-methyl-2-oxoglutarate aldolase (163 aa).

Substrate contacts are provided by residues 76–79 (GDML) and Arg98. Asp99 contributes to the a divalent metal cation binding site.

It belongs to the class II aldolase/RraA-like family. Homotrimer. The cofactor is a divalent metal cation.

It catalyses the reaction 4-hydroxy-4-methyl-2-oxoglutarate = 2 pyruvate. The enzyme catalyses oxaloacetate + H(+) = pyruvate + CO2. Its function is as follows. Catalyzes the aldol cleavage of 4-hydroxy-4-methyl-2-oxoglutarate (HMG) into 2 molecules of pyruvate. Also contains a secondary oxaloacetate (OAA) decarboxylase activity due to the common pyruvate enolate transition state formed following C-C bond cleavage in the retro-aldol and decarboxylation reactions. The chain is Putative 4-hydroxy-4-methyl-2-oxoglutarate aldolase from Pseudomonas putida (strain W619).